A 335-amino-acid polypeptide reads, in one-letter code: Adenosine deaminase (335 aa).

The Zn(2+) site is built by His12 and His14. Substrate-binding residues include His14 and Asp16. His197 contributes to the Zn(2+) binding site. The active-site Proton donor is the Glu200. Position 278 (Asp278) interacts with Zn(2+).

Belongs to the metallo-dependent hydrolases superfamily. Adenosine and AMP deaminases family. Adenosine deaminase subfamily. Zn(2+) serves as cofactor.

The catalysed reaction is adenosine + H2O + H(+) = inosine + NH4(+). It catalyses the reaction 2'-deoxyadenosine + H2O + H(+) = 2'-deoxyinosine + NH4(+). In terms of biological role, catalyzes the hydrolytic deamination of adenosine and 2-deoxyadenosine. This Clostridium botulinum (strain ATCC 19397 / Type A) protein is Adenosine deaminase.